A 309-amino-acid chain; its full sequence is L-lactate dehydrogenase (309 aa).

Residues valine 12, aspartate 33, arginine 38, tyrosine 63, and 77–78 (GA) each bind NAD(+). Residues glutamine 80, arginine 86, and 118 to 121 (NPVD) contribute to the substrate site. Residues 116–118 (ATN) and serine 141 each bind NAD(+). Substrate is bound at residue 146–149 (DSAR). Beta-D-fructose 1,6-bisphosphate-binding residues include arginine 151 and histidine 166. Histidine 173 acts as the Proton acceptor in catalysis. Tyrosine 219 is subject to Phosphotyrosine. A substrate-binding site is contributed by threonine 228.

The protein belongs to the LDH/MDH superfamily. LDH family. In terms of assembly, homotetramer.

The protein localises to the cytoplasm. The catalysed reaction is (S)-lactate + NAD(+) = pyruvate + NADH + H(+). It participates in fermentation; pyruvate fermentation to lactate; (S)-lactate from pyruvate: step 1/1. Allosterically activated by fructose 1,6-bisphosphate (FBP). Functionally, catalyzes the conversion of lactate to pyruvate. In Nitratidesulfovibrio vulgaris (strain ATCC 29579 / DSM 644 / CCUG 34227 / NCIMB 8303 / VKM B-1760 / Hildenborough) (Desulfovibrio vulgaris), this protein is L-lactate dehydrogenase.